We begin with the raw amino-acid sequence, 91 residues long: Lipolysis-activating peptide 1-alpha chain (91 aa).

The first 21 residues, 1-21 (MNIKLFCFLSILISLTGLSLS), serve as a signal peptide directing secretion. The region spanning 23 to 87 (DDGNYPIDAN…FFDAYKTYCK (65 aa)) is the LCN-type CS-alpha/beta domain. Intrachain disulfides connect Cys38–Cys61, Cys47–Cys66, and Cys51–Cys68.

This sequence belongs to the long (3 C-C) scorpion toxin superfamily. Heterodimer of this alpha chain and a beta chain (AC D9U2A2). As to expression, expressed by the venom gland.

It localises to the secreted. Functionally, the heterodimer LVP1 induces lipolysis in rat adipocytes. Induction of lipolysis by LVP1 appears to be mediated through the beta-2 adrenergic receptor pathway (ADRB2). The sequence is that of Lipolysis-activating peptide 1-alpha chain from Lychas mucronatus (Chinese swimming scorpion).